The chain runs to 609 residues: Autophagy-related protein 22-1 (609 aa).

4 helical membrane-spanning segments follow: residues 35–55, 117–137, 151–171, and 176–196; these read YGWAAEVFTVCAMGSFLPITL, TASFAMYTFSVSVFIQAILII, LLLMAFAVIGSVSTMLFLGVV, and MVGAVIAIIANTCFGASFVLL. The span at 214 to 231 shows a compositional bias: basic and acidic residues; sequence AREPRPALDDSRAQEGHS. The segment at 214–240 is disordered; sequence AREPRPALDDSRAQEGHSDTTNGIEHG. N-linked (GlcNAc...) asparagine glycosylation occurs at N244. A helical transmembrane segment spans residues 287 to 307; the sequence is IGIGYIGAIILQIVCILVVIA. The N-linked (GlcNAc...) asparagine glycan is linked to N309. 3 helical membrane passes run 317–337, 381–401, and 415–435; these read LVLFLIGLWWFIFSIPAALWL, ILLFLAAWLLLSDGIATVSGT, and AALGLINVIAMVAGVLGAFSW. The N-linked (GlcNAc...) asparagine glycan is linked to N443. A run of 4 helical transmembrane segments spans residues 450–470, 477–497, 522–542, and 552–572; these read IIACILLFELVPLYGLLGFIP, FLGLQQPWEMFPLGIVYGLVM, ALYAITDKGSSIFGPTIVGII, and AFVFLAILIFLPLPLMLLVDV.

The protein belongs to the ATG22 family.

It is found in the vacuole membrane. Vacuolar effluxer which mediate the efflux of amino acids resulting from autophagic degradation. The release of autophagic amino acids allows the maintenance of protein synthesis and viability during nitrogen starvation. This Aspergillus fumigatus (strain ATCC MYA-4609 / CBS 101355 / FGSC A1100 / Af293) (Neosartorya fumigata) protein is Autophagy-related protein 22-1 (atg22-1).